The chain runs to 238 residues: Histone H1 (238 aa).

2 stretches are compositionally biased toward low complexity: residues 21 to 34 (AAVDTPAAKPAKAP) and 123 to 132 (AKAPAAVKPK). 2 disordered regions span residues 21–57 (AAVDTPAAKPAKAPKAAKAKKSTPGPKKPRVTPAHPS) and 123–238 (AKAP…KAKK). The 71-residue stretch at 54-124 (AHPSYAEMVS…KVKGSYKLAK (71 aa)) folds into the H15 domain. Residues 133–197 (TATKKKPAAK…AAKPKAKAAA (65 aa)) are compositionally biased toward basic residues. Composition is skewed to low complexity over residues 198 to 208 (KKAPAAATPKK) and 217 to 230 (KRATPVKKAAPAKK).

It belongs to the histone H1/H5 family.

The protein resides in the nucleus. The protein localises to the chromosome. Histones H1 are necessary for the condensation of nucleosome chains into higher-order structures. In Triticum aestivum (Wheat), this protein is Histone H1.